The chain runs to 56 residues: Large ribosomal subunit protein bL32 (56 aa).

Residues 1 to 23 (MAVQQNKSTRSKRGMRRSHNALP) form a disordered region. Basic residues predominate over residues 9–19 (TRSKRGMRRSH).

This sequence belongs to the bacterial ribosomal protein bL32 family.

In Blochmanniella floridana, this protein is Large ribosomal subunit protein bL32.